Reading from the N-terminus, the 375-residue chain is Trichodiene synthase (375 aa).

The protein belongs to the trichodiene synthase family.

It carries out the reaction (2E,6E)-farnesyl diphosphate = trichodiene + diphosphate. It participates in sesquiterpene biosynthesis; trichothecene biosynthesis. Functionally, TS is a member of the terpene cyclase group of enzymes. It catalyzes the isomerization and cyclization of farnesyl pyro-phosphate to form trichodiene, the first cyclic intermediate in the biosynthetic pathway for trichothecenes. It serves to branch trichothecene biosynthesis from the isoprenoid pathway. The polypeptide is Trichodiene synthase (TRI5) (Fusarium cerealis (Fusarium crookwellense)).